The following is a 282-amino-acid chain: Cyanocobalamin reductase / alkylcobalamin dealkylase (282 aa).

Residues Asp104, 115–118 (ILAQ), 129–131 (YYQ), Cys149, and Ile160 each bind substrate. The interval 234–282 (LGLAQPSEKPSSPSPDLPFTTPAPKKPGNPSRARSWLSPRVSPPASPGP) is disordered. Phosphoserine occurs at positions 245, 247, 275, and 279.

The protein belongs to the MMACHC family. In terms of assembly, monomer in the absence of bound substrate. Homodimer; dimerization is triggered by binding to FMN or adenosylcobalamin. Interacts with LMBRD1 and ABCD4; the interaction ensures the transport of cobalamin from the lysosome to the cytoplasm. Forms a multiprotein complex with MMADHC, MTR and MTRR; the interaction with MTR could modulate MMACHC-dependent processing of cobalamin. Heterodimer with MMADHC; the interaction might play a role in the regulation of the balance between AdoCbl and MeCbl synthesis. FAD serves as cofactor. FMN is required as a cofactor. Widely expressed. Expressed at higher level in fetal liver. Also expressed in spleen, lymph node, thymus and bone marrow. Weakly or not expressed in peripheral blood leukocytes.

It localises to the cytoplasm. The protein localises to the cytosol. It catalyses the reaction 2 cob(II)alamin-[cyanocobalamin reductase] + 2 hydrogen cyanide + NADP(+) = 2 cyanocob(III)alamin + 2 apo-[cyanocobalamin reductase] + NADPH + H(+). The catalysed reaction is apo-[alkylcobalamin reductase] + an R-cob(III)alamin + glutathione = cob(I)alamin-[alkylcobalamin reductase] + an S-substituted glutathione + H(+). It carries out the reaction apo-[alkylcobalamin reductase] + methylcob(III)alamin + glutathione = S-methyl glutathione + cob(I)alamin-[alkylcobalamin reductase] + H(+). The enzyme catalyses apo-[alkylcobalamin reductase] + adenosylcob(III)alamin + glutathione = S-adenosylglutathione + cob(I)alamin-[alkylcobalamin reductase] + H(+). Cobalamin (vitamin B12) cytosolic chaperone that catalyzes the reductive decyanation of cyanocob(III)alamin (cyanocobalamin, CNCbl) to yield cob(II)alamin and cyanide, using FAD or FMN as cofactors and NADPH as cosubstrate. Cyanocobalamin constitutes the inactive form of vitamin B12 introduced from the diet, and is converted into the active cofactors methylcobalamin (MeCbl) involved in methionine biosynthesis, and 5'-deoxyadenosylcobalamin (AdoCbl) involved in the TCA cycle. Forms a complex with the lysosomal transporter ABCD4 and its chaperone LMBRD1, to transport cobalamin across the lysosomal membrane into the cytosol. The processing of cobalamin in the cytosol occurs in a multiprotein complex composed of at least MMACHC, MMADHC, MTRR (methionine synthase reductase) and MTR (methionine synthase) which may contribute to shuttle safely and efficiently cobalamin towards MTR in order to produce methionine. Also acts as a glutathione transferase by catalyzing the dealkylation of the alkylcob(III)alamins MeCbl and AdoCbl, using the thiolate of glutathione for nucleophilic displacement to generate cob(I)alamin and the corresponding glutathione thioether. The conversion of incoming MeCbl or AdoCbl into a common intermediate cob(I)alamin is necessary to meet the cellular needs for both cofactors. Cysteine and homocysteine cannot substitute for glutathione in this reaction. This Homo sapiens (Human) protein is Cyanocobalamin reductase / alkylcobalamin dealkylase.